A 414-amino-acid chain; its full sequence is WD repeat-containing protein jip5 (414 aa).

WD repeat units follow at residues 9-48, 73-112, 118-159, 222-263, and 319-356; these read PLSA…SSDD, RHKG…VENK, AKDG…SNVS, VSSV…DQDE, and DETE…NDMD. Residues 39–65 form a disordered region; it reads RLPSEESSDDDDGTASNSSARNGKGHI. Residues 357–414 form a disordered region; sequence VDMAGGKRMFGGDSDDSDDDNDSEDSEQEQRQPVEPQRKRKKNKGKGKRDIIAFADID. A compositionally biased stretch (acidic residues) spans 369-383; the sequence is DSDDSDDDNDSEDSE. Residues 394–403 are compositionally biased toward basic residues; the sequence is RKRKKNKGKG.

Belongs to the WD repeat WDR55 family.

It localises to the nucleus. Its subcellular location is the nucleolus. The polypeptide is WD repeat-containing protein jip5 (jip5) (Aspergillus clavatus (strain ATCC 1007 / CBS 513.65 / DSM 816 / NCTC 3887 / NRRL 1 / QM 1276 / 107)).